The primary structure comprises 1033 residues: Tyrosine-protein kinase-like otk (1033 aa).

The signal sequence occupies residues 1 to 22; the sequence is MTARMISIYGLVLASMMASVLA. Residues 23–581 are Extracellular-facing; it reads SSSRFQRLPQ…GGDGFLVTRA (559 aa). 5 consecutive Ig-like C2-type domains span residues 25–114, 113–199, 251–365, 368–463, and 468–558; these read SRFQ…AKLS, LSVI…RVMS, PEDL…VPVS, PGVL…VAIN, and PKFS…VQLI. Asparagine 39 carries N-linked (GlcNAc...) asparagine glycosylation. Intrachain disulfides connect cysteine 46–cysteine 95, cysteine 137–cysteine 188, cysteine 276–cysteine 354, and cysteine 399–cysteine 447. 7 N-linked (GlcNAc...) asparagine glycosylation sites follow: asparagine 336, asparagine 417, asparagine 429, asparagine 444, asparagine 457, asparagine 512, and asparagine 524. A disulfide bridge connects residues cysteine 490 and cysteine 542. Residues 582–602 form a helical membrane-spanning segment; that stretch reads VLITMTVALAYIVLVVGLMLW. The Cytoplasmic segment spans residues 603 to 1033; that stretch reads CRYRRQARKA…LSKAMQSAEK (431 aa). 2 disordered regions span residues 617 to 679 and 718 to 760; these read LSTK…KKSA and SPSD…KTSM. Positions 655 to 673 are enriched in polar residues; it reads KSSGDAQKSDDTACSQQSR. A Phosphoserine modification is found at serine 678. In terms of domain architecture, Protein kinase; inactive spans 692–1028; the sequence is LSELIQIGRG…QLGAALSKAM (337 aa). Residues 720–731 show a composition bias toward basic and acidic residues; that stretch reads SDKDADTEKQHS.

The protein belongs to the protein kinase superfamily. Tyr protein kinase family. Insulin receptor subfamily. In terms of assembly, interacts with plexA; component of a receptor complex that mediates the repulsive signaling in response to Semaphorin ligands.

Its subcellular location is the cell membrane. Functionally, acts as a calcium-dependent, homophilic cell adhesion molecule that regulates neural recognition during the development of the nervous system. Component of the repulsive Plexin signaling response to regulate motor axon guidance at the embryonic stage. Also component of a receptor complex that is required in the adult visual system to innervate the lamina layer; specific targeting of R1-R6 axons. This chain is Tyrosine-protein kinase-like otk, found in Drosophila yakuba (Fruit fly).